The primary structure comprises 492 residues: MGSCWSCLDRDSVPHNHPTKFKVTNVDDEGVELGSGVMELTQSELVLHLHQREAVRWPYLCLRRYGYDSNLFSFESGRRCQTGQGIFAFKCSRAEDIFNLLQDLMQCNSINVTEEPVIITRSSHPPELDLPRGPPQPAGYTVSGFSNGFPGCPGEGPRFSSAPRRPSTSSLRHPSPGEESTHTLIASEEQSHTYVNTPTGDEDGRSRHCLQPLPEGRVPLPAQTQGSDQRDPQVLLQPGQVKFVLGPTPARRQVMKCQSLCPGMQDPPHHNNNEGPSECPAQPKCTYENVSGGLQQGAGWRLSPEERGWSGLAHRRAALLHYENLPPLPPVWESQGQQPGGEAGDDGDSRDGLTPSSNGFPDGEEDETPLQKPTSTRASARSHSGFPVPLTRRRGSPRVFNFDFRRQGPEPPRQLNYIQVELKGWGTARPKGPQNPSVSGAPGPTPHPVRSSDSYAVIDLKKTAAMSDLQRALPRDDGAVRKTRHNSTDLPL.

A lipid anchor (N-myristoyl glycine) is attached at G2. The IRS-type PTB domain maps to 13–115 (VPHNHPTKFK…QCNSINVTEE (103 aa)). 4 disordered regions span residues 122–230 (SSHP…SDQR), 328–414 (LPPV…PPRQ), 426–454 (GTARPKGPQNPSVSGAPGPTPHPVRSSDS), and 469–492 (LQRALPRDDGAVRKTRHNSTDLPL). Positions 371–382 (QKPTSTRASARS) are enriched in polar residues.

As to quaternary structure, binds NGFR, GRB2, PTPN11 and ERK2. Binds FGFR1 and NTRK1. Post-translationally, phosphorylated on tyrosine residues upon stimulation by BFGF or NGFB. Phosphorylated by ULK2 in vitro.

The protein localises to the membrane. Its function is as follows. Adapter protein that links FGF and NGF receptors to downstream signaling pathways. Involved in the activation of MAP kinases. Down-regulates ERK2 signaling by interfering with the phosphorylation and nuclear translocation of ERK2. This is Fibroblast growth factor receptor substrate 3 (Frs3) from Mus musculus (Mouse).